Here is a 259-residue protein sequence, read N- to C-terminus: Phosphate import ATP-binding protein PstB 1 (259 aa).

The ABC transporter domain occupies 7-254; it reads VKPEDVYQIN…PDDHRTKDYI (248 aa). 45–52 contacts ATP; sequence GPSGCGKS.

Belongs to the ABC transporter superfamily. Phosphate importer (TC 3.A.1.7) family. The complex is composed of two ATP-binding proteins (PstB), two transmembrane proteins (PstC and PstA) and a solute-binding protein (PstS).

It is found in the cell membrane. The enzyme catalyses phosphate(out) + ATP + H2O = ADP + 2 phosphate(in) + H(+). In terms of biological role, part of the ABC transporter complex PstSACB involved in phosphate import. Responsible for energy coupling to the transport system. The chain is Phosphate import ATP-binding protein PstB 1 from Bacillus licheniformis (strain ATCC 14580 / DSM 13 / JCM 2505 / CCUG 7422 / NBRC 12200 / NCIMB 9375 / NCTC 10341 / NRRL NRS-1264 / Gibson 46).